A 1197-amino-acid polypeptide reads, in one-letter code: DNA-directed RNA polymerase subunit beta (1197 aa).

The span at 1172–1185 shows a compositional bias: basic and acidic residues; it reads KEQEEKKAQQEAEK. The tract at residues 1172 to 1197 is disordered; sequence KEQEEKKAQQEAEKAQAASAEDPSAE. Over residues 1186-1197 the composition is skewed to low complexity; it reads AQAASAEDPSAE.

This sequence belongs to the RNA polymerase beta chain family. The RNAP catalytic core consists of 2 alpha, 1 beta, 1 beta' and 1 omega subunit. When a sigma factor is associated with the core the holoenzyme is formed, which can initiate transcription.

It catalyses the reaction RNA(n) + a ribonucleoside 5'-triphosphate = RNA(n+1) + diphosphate. DNA-dependent RNA polymerase catalyzes the transcription of DNA into RNA using the four ribonucleoside triphosphates as substrates. The chain is DNA-directed RNA polymerase subunit beta from Latilactobacillus sakei subsp. sakei (strain 23K) (Lactobacillus sakei subsp. sakei).